A 399-amino-acid polypeptide reads, in one-letter code: Forkhead box protein I3 (399 aa).

Disordered regions lie at residues 87 to 109, 221 to 287, and 307 to 353; these read AGAQ…GSAA, KRRR…ASTL, and SSSS…STVG. The span at 96–109 shows a compositional bias: low complexity; that stretch reads PSASAPASPAGSAA. Phosphoserine occurs at positions 99 and 103. The fork-head DNA-binding region spans 129–223; that stretch reads RPPYSYSALI…DNGNFRRKRR (95 aa). Positions 219–225 match the Nuclear localization signal motif; the sequence is RRKRRRR. Polar residues-rich tracts occupy residues 228–248 and 258–267; these read ASSN…SSRL and SPSSILRPSQ. Phosphoserine occurs at positions 258, 266, and 268. Composition is skewed to polar residues over residues 275 to 287, 307 to 317, and 328 to 353; these read TKST…ASTL, SSSSMGNQRTL, and QLPS…STVG. Positions 385 to 393 match the 9aaTAD motif; the sequence is SMVNSLIYP.

Post-translationally, phosphorylation promotes the transcription factor activity. Dephosphorylation by protein phosphatase 2A (PP2A) reduces its activity. As to expression, specifically expressed in the epithelium in developing ectodermal appendages. Expressed in pharyngeal endoderm and ectoderm. Expressed in pre-placodal ectoderm. Down-regulated as the otic placode is induced. Expressed in teeth and hair follicles throughout embryogenesis. Expressed in mammary glands only during the earliest stages of development.

It localises to the nucleus. Functionally, transcription factor required for pharyngeal arch development, which is involved in hair, ear, jaw and dental development. May act as a pioneer transcription factor during pharyngeal arch development. Required for epithelial cell differentiation within the epidermis. Acts at multiple stages of otic placode induction: necessary for preplacodal ectoderm to execute an inner ear program. Required for hair follicle stem cell specification. Acts downstream of TBX1 for the formation of the thymus and parathyroid glands from the third pharyngeal pouch. This Mus musculus (Mouse) protein is Forkhead box protein I3.